A 166-amino-acid polypeptide reads, in one-letter code: Putative membrane protein 164 (166 aa).

Residues 1-4 lie on the Intravirion side of the membrane; it reads MYHP. The chain crosses the membrane as a helical span at residues 5–25; it reads VVQVLIGLILVIILILGFYHL. Topologically, residues 26–166 are virion surface; that stretch reads KKKSCKTDTD…TIMGIARNIL (141 aa).

This sequence belongs to the asfivirus envelope protein p22 family.

The protein resides in the virion membrane. The protein localises to the host cell membrane. This Ornithodoros (relapsing fever ticks) protein is Putative membrane protein 164.